Consider the following 621-residue polypeptide: Phosphoenolpyruvate carboxykinase [GTP] (621 aa).

Substrate-binding positions include Arg82 and 220-222 (YGG). Mn(2+) is bound by residues Lys229 and His249. Substrate is bound at residue Ser271. 272–277 (QCGKTN) serves as a coordination point for GTP. Residue Cys273 is part of the active site. A Mn(2+)-binding site is contributed by Asp296. 386 to 388 (NSR) serves as a coordination point for substrate. GTP-binding positions include Arg388, Arg419, and 514–517 (FGEN).

It belongs to the phosphoenolpyruvate carboxykinase [GTP] family. As to quaternary structure, monomer. Mn(2+) serves as cofactor.

The protein localises to the cytoplasm. It catalyses the reaction oxaloacetate + GTP = phosphoenolpyruvate + GDP + CO2. It participates in carbohydrate biosynthesis; gluconeogenesis. Its function is as follows. Catalyzes the conversion of oxaloacetate (OAA) to phosphoenolpyruvate (PEP), the rate-limiting step in the metabolic pathway that produces glucose from lactate and other precursors derived from the citric acid cycle. The sequence is that of Phosphoenolpyruvate carboxykinase [GTP] from Corynebacterium kroppenstedtii (strain DSM 44385 / JCM 11950 / CIP 105744 / CCUG 35717).